The following is a 415-amino-acid chain: Multidrug resistance protein MdtA (415 aa).

Residues 1–21 (MKGSYKSRWVIVIVVVIAAIA) form the signal peptide. A compositionally biased stretch (polar residues) spans 31–47 (DSQSAAPGATKQAQQSP). Disordered stretches follow at residues 31–60 (DSQSAAPGATKQAQQSPAGGRRGMRSGPLA) and 392–415 (EAQSTTTSEEKATSREYAKKGARS). Positions 399-415 (SEEKATSREYAKKGARS) are enriched in basic and acidic residues.

It belongs to the membrane fusion protein (MFP) (TC 8.A.1) family. As to quaternary structure, part of a tripartite efflux system composed of MdtA, MdtB and MdtC.

It is found in the cell inner membrane. The MdtABC tripartite complex confers resistance against novobiocin and deoxycholate. The polypeptide is Multidrug resistance protein MdtA (Escherichia coli O139:H28 (strain E24377A / ETEC)).